A 244-amino-acid chain; its full sequence is Probable hydrolase R7 (244 aa).

The signal sequence occupies residues 1-20 (MTKPFILLVPGSFAPETIYA). Active-site charge relay system residues include D192 and H224. A glycan (N-linked (GlcNAc...) asparagine) is linked at N227.

The protein belongs to the AB hydrolase superfamily.

It participates in secondary metabolite biosynthesis. In terms of biological role, probable hydrolase; part of the gene cluster that mediates the biosynthesis of squalestatin S1 (SQS1, also known as zaragozic acid A), a lead compound for the treatment of hyper-cholesterolemia by targeting squalene synthase (SS). Both phenylalanine and benzoic acid are known precursors of SQS1 and so it is unsurprising that the cluster also contains genes potentially involved in benzoate production such as phenyl-alanine ammonia lysase (PAL) M7, which catalyzes the first step in the degradation of phenylalanine, or the NADP-dependent dehydrogenase M3. The cluster contains two PKS encoding genes. The tetraketide synthase is responsible for the biosynthesis of the tetraketide sidechain of SQS1. The biosynthesis must involve 3 rounds of chain extension. After the first and second rounds methyl-transfer occurs, and in all rounds of extension the ketoreductase and dehydratase areactive. The enoyl reductase and C-MeT are not active in the final round of extension. The other PKS is therefore likely to encode squalestatin hexaketide synthase (SQHKS). The hexaketide main chain is initiated by benzoate which is an unusual starter unit for a highly reducing polyketide synthase. The cluster also contains a gene encoding a citrate synthase-like protein R3 presumably involved in linking the hexaketide to the oxaloacetate moiety. Formation of the tetraketide CoA may be catalyzed by the M9 CoA ligase, but the mechanism of release of the tetraketide and the hexaketide from their respective PKS remains unknown, although the cluster encodes a potential esterase (M8) and a possible hydrolase (M10) which could be involved in these processes. Two acyltransferases (AT), M4 and R4, are also encoded in the cluster. M4 is responsible for loading of the tetraketide sidechain from CoA onto the squalestatin core as the final step of biosynthesis. M4 appears to have a broad substrate selectivity for its acyl CoA substrate, allowing the in vitro synthesis of novel squalestatins. The biosynthesis of SQS1 requires several oxidative steps likely performed by oxidoreductases M1, R1 and R2. Finally, in support of the identification of the cluster as being responsible for SQS1 production, the cluster contains a gene encoding a putative squalene synthase (SS) R6, suggesting a likely mechanism for self-resistance. This is Probable hydrolase R7 from Phoma sp. (strain ATCC 20986 / MF5453).